The following is a 305-amino-acid chain: Ribonucleoside-diphosphate reductase small subunit (305 aa).

Residues glutamate 64, glutamate 94, and histidine 97 each coordinate Fe cation. Tyrosine 101 is a catalytic residue. Residues 150-170 (ILMFLIVEGIYFISSFYSISL) traverse the membrane as a helical segment. Fe cation is bound by residues glutamate 157, glutamate 191, and histidine 194.

Belongs to the ribonucleoside diphosphate reductase small chain family. As to quaternary structure, heterotetramer composed of a homodimer of the large subunit (R1) and a homodimer of the small subunit (R2). Larger multisubunit protein complex are also active, composed of (R1)n(R2)n. Fe cation serves as cofactor.

It localises to the host membrane. It carries out the reaction a 2'-deoxyribonucleoside 5'-diphosphate + [thioredoxin]-disulfide + H2O = a ribonucleoside 5'-diphosphate + [thioredoxin]-dithiol. Its function is as follows. Ribonucleoside-diphosphate reductase holoenzyme provides the precursors necessary for viral DNA synthesis. Allows virus growth in non-dividing cells, as well as reactivation from latency in infected hosts. Catalyzes the biosynthesis of deoxyribonucleotides from the corresponding ribonucleotides. The protein is Ribonucleoside-diphosphate reductase small subunit of Homo sapiens (Human).